The following is a 1246-amino-acid chain: Respiratory nitrate reductase 2 alpha chain (1246 aa).

A 4Fe-4S Mo/W bis-MGD-type domain is found at 43-107 (DKIVRSTHGV…SYSWYLYSAN (65 aa)). [4Fe-4S] cluster is bound by residues His50, Cys54, Cys58, and Cys93. Mo-bis(molybdopterin guanine dinucleotide) is bound at residue Asp223.

Belongs to the prokaryotic molybdopterin-containing oxidoreductase family. As to quaternary structure, tetramer composed of an alpha, a beta and 2 gamma chains. Alpha and beta are catalytic chains; gamma chain is involved in binding the enzyme complex to the cytoplasmic membrane. Requires [4Fe-4S] cluster as cofactor. The cofactor is Mo-bis(molybdopterin guanine dinucleotide).

It is found in the cell membrane. The catalysed reaction is nitrate + a quinol = a quinone + nitrite + H2O. Its function is as follows. This is a second nitrate reductase enzyme which can substitute for the NRA enzyme and allows E.coli to use nitrate as an electron acceptor during anaerobic growth. Functionally, the alpha chain is the actual site of nitrate reduction. This chain is Respiratory nitrate reductase 2 alpha chain (narZ), found in Escherichia coli (strain K12).